Here is a 428-residue protein sequence, read N- to C-terminus: MAKEKPILNVAFIGHVDAGKSTTVGRLLLDGGAIDPQLIVRLKKEAEEKGKAGFEFAYVMDGLKEERERGVTIDVAHKKFPTAKYEVTIVDCPGHRDFIKNMITGASQADAAILVVNVDDAKSGIQPQTREHVFLSRTLGISQLAVAINKMDTVNFSEADYNEMKKMLGDQLLKMVGFNPDNITFVPVASLHGDNVFKKSDKTPWYNGPTLAEVIDAFQPPEKPTTLPLRLPIQDVYSITGVGTVPVGRVETGIIKPGDKVIFEPAGAVGEIKTVEMHHEQLPSAEPGDNIGFNVRGVGKKDIKRGDVLGHTTNPPTVAADFTAQIVVLQHPSVMTVGYTPVFHAHTAQIACTFMELQKKLNPATGEVLEENPDFLKAGDAAIVKLMPTKPLVMESVKEIPQLGRFAIRDMGMTVAAGMAIQVTAKNK.

The tr-type G domain occupies 5–225 (KPILNVAFIG…DAFQPPEKPT (221 aa)). The G1 stretch occupies residues 14–21 (GHVDAGKS). 14 to 21 (GHVDAGKS) is a GTP binding site. Ser21 is a Mg(2+) binding site. A G2 region spans residues 70–74 (GVTID). The G3 stretch occupies residues 91–94 (DCPG). GTP-binding positions include 91 to 95 (DCPGH) and 149 to 152 (NKMD). Residues 149–152 (NKMD) form a G4 region. The tract at residues 189–191 (ASL) is G5.

The protein belongs to the TRAFAC class translation factor GTPase superfamily. Classic translation factor GTPase family. EF-Tu/EF-1A subfamily.

Its subcellular location is the cytoplasm. The catalysed reaction is GTP + H2O = GDP + phosphate + H(+). In terms of biological role, GTP hydrolase that promotes the GTP-dependent binding of aminoacyl-tRNA to the A-site of ribosomes during protein biosynthesis. The sequence is that of Elongation factor 1-alpha from Methanococcus maripaludis (strain C5 / ATCC BAA-1333).